A 329-amino-acid polypeptide reads, in one-letter code: Cytosolic arginine sensor for mTORC1 subunit 1 (329 aa).

Serine 14 carries the phosphoserine modification. 2 consecutive ACT domains span residues 72-138 and 260-321; these read AEAT…HTLA and GELW…EVLQ. L-arginine contacts are provided by residues 111–112, glycine 274, 280–281, and 300–304; these read SV, IV, and TFNFD.

Belongs to the GATS family. As to quaternary structure, forms homodimers and heterodimers with CASTOR2. Interacts with the GATOR2 complex which is composed of MIOS, SEC13, SEH1L, WDR24 and WDR59; the interaction is negatively regulated by arginine. Interacts with TM4SF5; the interaction is positively regulated by leucine and is negatively regulated by arginine. Phosphorylation at Ser-14 by AKT1, promoting the interaction between CASTOR1 and RNF167. Post-translationally, ubiquitinated by RNF167 via 'Lys-29'-polyubiquitination, leading to its degradation, releasing the GATOR2 complex. Ubiquitination by RNF167 is promoted by phosphorylation at Ser-14 by AKT1.

The protein localises to the cytoplasm. Its subcellular location is the cytosol. In terms of biological role, functions as an intracellular arginine sensor within the amino acid-sensing branch of the TORC1 signaling pathway. As a homodimer or a heterodimer with CASTOR2, binds and inhibits the GATOR subcomplex GATOR2 and thereby mTORC1. Binding of arginine to CASTOR1 allosterically disrupts the interaction of CASTOR1-containing dimers with GATOR2 which can in turn activate mTORC1 and the TORC1 signaling pathway. In Pongo abelii (Sumatran orangutan), this protein is Cytosolic arginine sensor for mTORC1 subunit 1.